The primary structure comprises 295 residues: 4-hydroxy-tetrahydrodipicolinate synthase (295 aa).

Threonine 46 lines the pyruvate pocket. Tyrosine 134 functions as the Proton donor/acceptor in the catalytic mechanism. Lysine 162 acts as the Schiff-base intermediate with substrate in catalysis. Isoleucine 205 contributes to the pyruvate binding site.

Belongs to the DapA family. In terms of assembly, homotetramer; dimer of dimers.

The protein localises to the cytoplasm. It catalyses the reaction L-aspartate 4-semialdehyde + pyruvate = (2S,4S)-4-hydroxy-2,3,4,5-tetrahydrodipicolinate + H2O + H(+). Its pathway is amino-acid biosynthesis; L-lysine biosynthesis via DAP pathway; (S)-tetrahydrodipicolinate from L-aspartate: step 3/4. Its function is as follows. Catalyzes the condensation of (S)-aspartate-beta-semialdehyde [(S)-ASA] and pyruvate to 4-hydroxy-tetrahydrodipicolinate (HTPA). The polypeptide is 4-hydroxy-tetrahydrodipicolinate synthase (Anaeromyxobacter dehalogenans (strain 2CP-1 / ATCC BAA-258)).